The primary structure comprises 1343 residues: DNA-directed RNA polymerase subunit beta (1343 aa).

The protein belongs to the RNA polymerase beta chain family. The RNAP catalytic core consists of 2 alpha, 1 beta, 1 beta' and 1 omega subunit. When a sigma factor is associated with the core the holoenzyme is formed, which can initiate transcription.

It carries out the reaction RNA(n) + a ribonucleoside 5'-triphosphate = RNA(n+1) + diphosphate. Functionally, DNA-dependent RNA polymerase catalyzes the transcription of DNA into RNA using the four ribonucleoside triphosphates as substrates. This chain is DNA-directed RNA polymerase subunit beta, found in Buchnera aphidicola subsp. Cinara cedri (strain Cc).